A 172-amino-acid chain; its full sequence is Co-chaperone protein HscB (172 aa).

Residues Asp-2 to Leu-74 form the J domain.

The protein belongs to the HscB family. In terms of assembly, interacts with HscA and stimulates its ATPase activity. Interacts with IscU.

Functionally, co-chaperone involved in the maturation of iron-sulfur cluster-containing proteins. Seems to help targeting proteins to be folded toward HscA. In Pectobacterium carotovorum subsp. carotovorum (strain PC1), this protein is Co-chaperone protein HscB.